The primary structure comprises 307 residues: S-methyl-5'-thioadenosine phosphorylase (307 aa).

Phosphate-binding positions include S16, 59-60, and 92-93; these read RH and SA. M198 serves as a coordination point for substrate. S199 contributes to the phosphate binding site. 222–224 is a binding site for substrate; it reads DYD.

The protein belongs to the PNP/MTAP phosphorylase family. MTAP subfamily. As to quaternary structure, homotrimer.

It is found in the cytoplasm. The protein localises to the nucleus. The catalysed reaction is S-methyl-5'-thioadenosine + phosphate = 5-(methylsulfanyl)-alpha-D-ribose 1-phosphate + adenine. The protein operates within amino-acid biosynthesis; L-methionine biosynthesis via salvage pathway; S-methyl-5-thio-alpha-D-ribose 1-phosphate from S-methyl-5'-thioadenosine (phosphorylase route): step 1/1. Its function is as follows. Catalyzes the reversible phosphorylation of S-methyl-5'-thioadenosine (MTA) to adenine and 5-methylthioribose-1-phosphate. Involved in the breakdown of MTA, a major by-product of polyamine biosynthesis. Responsible for the first step in the methionine salvage pathway after MTA has been generated from S-adenosylmethionine. Has broad substrate specificity with 6-aminopurine nucleosides as preferred substrates. The polypeptide is S-methyl-5'-thioadenosine phosphorylase (Schizosaccharomyces pombe (strain 972 / ATCC 24843) (Fission yeast)).